A 119-amino-acid polypeptide reads, in one-letter code: Large ribosomal subunit protein uL18 (119 aa).

This sequence belongs to the universal ribosomal protein uL18 family. As to quaternary structure, part of the 50S ribosomal subunit; part of the 5S rRNA/L5/L18/L25 subcomplex. Contacts the 5S and 23S rRNAs.

Functionally, this is one of the proteins that bind and probably mediate the attachment of the 5S RNA into the large ribosomal subunit, where it forms part of the central protuberance. The sequence is that of Large ribosomal subunit protein uL18 from Mesorhizobium japonicum (strain LMG 29417 / CECT 9101 / MAFF 303099) (Mesorhizobium loti (strain MAFF 303099)).